The following is a 1226-amino-acid chain: Methionine synthase (1226 aa).

In terms of domain architecture, Hcy-binding spans 6–326; sequence RAQIEAQLKQ…EHIRHMAMAV (321 aa). The Zn(2+) site is built by Cys-248, Cys-311, and Cys-312. The Pterin-binding domain maps to 357–618; it reads FVNVGERTNV…VPEKLREAVE (262 aa). The 95-residue stretch at 651–745 folds into the B12-binding N-terminal domain; that stretch reads SALEWRTWSV…FINASKQAGS (95 aa). Residues Glu-695, 757–761, His-760, Ser-805, Thr-809, and Ala-861 contribute to the methylcob(III)alamin site; that span reads GDVHD. In terms of domain architecture, B12-binding spans 747–882; sequence NGKILLATVK…SDELRPAFVE (136 aa). Positions 898 to 1226 constitute an AdoMet activation domain; sequence KKPRTKPVTL…EKWLGPNING (329 aa). S-adenosyl-L-methionine-binding positions include Asp-948, Arg-1136, and 1191 to 1192; that span reads YF.

It belongs to the vitamin-B12 dependent methionine synthase family. Requires methylcob(III)alamin as cofactor. Zn(2+) is required as a cofactor.

The enzyme catalyses (6S)-5-methyl-5,6,7,8-tetrahydrofolate + L-homocysteine = (6S)-5,6,7,8-tetrahydrofolate + L-methionine. The protein operates within amino-acid biosynthesis; L-methionine biosynthesis via de novo pathway; L-methionine from L-homocysteine (MetH route): step 1/1. Catalyzes the transfer of a methyl group from methyl-cobalamin to homocysteine, yielding enzyme-bound cob(I)alamin and methionine. Subsequently, remethylates the cofactor using methyltetrahydrofolate. The chain is Methionine synthase (metH) from Vibrio vulnificus (strain CMCP6).